The sequence spans 1111 residues: Cell death abnormality protein 1 (1111 aa).

The N-terminal stretch at 1-18 (MRLILLVLLATWQVVVDT) is a signal peptide. The Extracellular portion of the chain corresponds to 19 to 910 (RAPTFPDKLT…NGAGRSTGLT (892 aa)). Positions 41-113 (GDHVCTVKTI…QCCDGYYQTK (73 aa)) constitute an EMI domain. 15 disulfides stabilise this stretch: cysteine 45–cysteine 106, cysteine 71–cysteine 80, cysteine 105–cysteine 117, cysteine 121–cysteine 130, cysteine 125–cysteine 136, cysteine 138–cysteine 147, cysteine 160–cysteine 172, cysteine 166–cysteine 179, cysteine 181–cysteine 190, cysteine 203–cysteine 215, cysteine 209–cysteine 221, cysteine 223–cysteine 232, cysteine 245–cysteine 257, cysteine 251–cysteine 264, and cysteine 266–cysteine 275. N-linked (GlcNAc...) asparagine glycosylation is present at asparagine 66. EGF-like domains lie at 118-148 (LPDCNPPCKKGKCIEPGKCECDPGYGGKYCA), 156-191 (WGLGCSKSCDCENGANCDPELGTCICTSGFQGERCE), 199-233 (WGPNCVKSCPCQNGGKCNKEGKCVCSDGWGGEFCL), and 241-276 (FGAECKFECNCQNGATCDNTNGKCICKSGYHGALCE). N-linked (GlcNAc...) asparagine glycosylation is found at asparagine 333 and asparagine 345. Residues 421-458 (YGPNCEKQAMCDWNHASECNPETGSCVCKPGRTGKNCS) enclose the EGF-like 5 domain. 3 disulfide bridges follow: cysteine 425–cysteine 439, cysteine 431–cysteine 446, and cysteine 448–cysteine 457. Asparagine 456 carries N-linked (GlcNAc...) asparagine glycosylation. An FU repeat occupies 629 to 680 (DQKCDPNTFGFLCQETVTPSPCASTDPKNGVCLSCPPGSSGIHCEHNCPAGS). In terms of domain architecture, EGF-like 6 spans 681–716 (YGDGCQQVCSCADGHGCDPTTGECICEPGYHGKTCS). Intrachain disulfides connect cysteine 685–cysteine 697, cysteine 691–cysteine 704, and cysteine 706–cysteine 715. The helical transmembrane segment at 911 to 931 (WFFVLLIVALCGGLGLIALFY) threads the bilayer. The interaction with trim-21 stretch occupies residues 931-1007 (YRNKYQKEKD…EEELENKKIH (77 aa)). The Cytoplasmic portion of the chain corresponds to 932–1111 (RNKYQKEKDP…KKRAQDNLYT (180 aa)). 2 disordered regions span residues 940-993 (DPDM…PNGL) and 1006-1111 (IHGR…NLYT). Positions 962 to 965 (NPLY) match the NPXY motif. Positions 963–980 (PLYSRQSVFPDSDAFSSE) are enriched in polar residues. At tyrosine 1019 the chain carries Phosphotyrosine; by SRC. A YXXL motif is present at residues 1019 to 1022 (YASL). The segment covering 1030–1039 (SSSSASASAS) has biased composition (low complexity). Over residues 1068-1083 (NSISPAHAVTTSNHNE) the composition is skewed to polar residues.

As to quaternary structure, interacts (via C-terminus) with ced-6 (via PTB domain). Interacts with nck-1; the interaction is required for ced-1 degradation through the proteasome pathway. Interacts with V-ATPase vha-10. Phosphorylation of Tyr-1019, within the YXXL motif, by src-1 is thought to initiate phagosomal formation. In terms of processing, 'Lys-48'-linked polyubiquitination by trim-21 leads to proteasomal degradation. As to expression, expressed in engulfing cells and syncytium hypodermal cells. Ced-7 is necessary for clustering around cell corpses prior to engulfment.

It localises to the cell membrane. It is found in the cytoplasmic vesicle. The protein resides in the phagosome membrane. Involved in programmed cell death, also called apoptosis, in both somatic and germ cells. Acts by recruiting ced-6 to phagosomes which enables actin-dependent cytoskeletal reorganization and subsequent engulfment of the apoptotic cell corpse. Has a role in the association of ppk-3 and rab-7 with the phagosomal surface which is necessary for the incorporation of lysosomes to phagosomes during phagosome maturation. Activates the expression of unfolded protein response genes, which are involved in the immune response to live bacteria. The sequence is that of Cell death abnormality protein 1 from Caenorhabditis elegans.